Consider the following 125-residue polypeptide: MKKRRGPSEDENPRPEKLFTQKVFDYISRVILKYFKKTYKFIIYILKNLTLFKILYKCFPYIKNFILKIDKIFFHVLIKSINFIKYIPQLIHDKIFEFFWFILKIFQILIFVKIFKYVIKKFIIY.

It is found in the plastid. This is an uncharacterized protein from Euglena longa (Euglenophycean alga).